The sequence spans 112 residues: Large ribosomal subunit protein eL34A (112 aa).

It belongs to the eukaryotic ribosomal protein eL34 family. As to quaternary structure, component of the large ribosomal subunit (LSU). Mature yeast ribosomes consist of a small (40S) and a large (60S) subunit. The 40S small subunit contains 1 molecule of ribosomal RNA (18S rRNA) and at least 33 different proteins. The large 60S subunit contains 3 rRNA molecules (25S, 5.8S and 5S rRNA) and at least 46 different proteins.

The protein resides in the cytoplasm. Its function is as follows. Component of the ribosome, a large ribonucleoprotein complex responsible for the synthesis of proteins in the cell. The small ribosomal subunit (SSU) binds messenger RNAs (mRNAs) and translates the encoded message by selecting cognate aminoacyl-transfer RNA (tRNA) molecules. The large subunit (LSU) contains the ribosomal catalytic site termed the peptidyl transferase center (PTC), which catalyzes the formation of peptide bonds, thereby polymerizing the amino acids delivered by tRNAs into a polypeptide chain. The nascent polypeptides leave the ribosome through a tunnel in the LSU and interact with protein factors that function in enzymatic processing, targeting, and the membrane insertion of nascent chains at the exit of the ribosomal tunnel. This chain is Large ribosomal subunit protein eL34A (rpl3401), found in Schizosaccharomyces pombe (strain 972 / ATCC 24843) (Fission yeast).